A 271-amino-acid polypeptide reads, in one-letter code: Type III pantothenate kinase (271 aa).

6-13 (DVRNTNIV) contacts ATP. 109–112 (GADR) contributes to the substrate binding site. D111 functions as the Proton acceptor in the catalytic mechanism. Residue D131 participates in K(+) binding. Residue T134 coordinates ATP. A substrate-binding site is contributed by T186.

This sequence belongs to the type III pantothenate kinase family. In terms of assembly, homodimer. Requires NH4(+) as cofactor. K(+) serves as cofactor.

The protein localises to the cytoplasm. It catalyses the reaction (R)-pantothenate + ATP = (R)-4'-phosphopantothenate + ADP + H(+). Its pathway is cofactor biosynthesis; coenzyme A biosynthesis; CoA from (R)-pantothenate: step 1/5. In terms of biological role, catalyzes the phosphorylation of pantothenate (Pan), the first step in CoA biosynthesis. The polypeptide is Type III pantothenate kinase (Rhodococcus erythropolis (strain PR4 / NBRC 100887)).